The chain runs to 261 residues: Thiazole synthase (261 aa).

K97 serves as the catalytic Schiff-base intermediate with DXP. 1-deoxy-D-xylulose 5-phosphate contacts are provided by residues G158, 184-185, and 206-207; these read AG and AS.

It belongs to the ThiG family. Homotetramer. Forms heterodimers with either ThiH or ThiS.

It localises to the cytoplasm. It catalyses the reaction [ThiS sulfur-carrier protein]-C-terminal-Gly-aminoethanethioate + 2-iminoacetate + 1-deoxy-D-xylulose 5-phosphate = [ThiS sulfur-carrier protein]-C-terminal Gly-Gly + 2-[(2R,5Z)-2-carboxy-4-methylthiazol-5(2H)-ylidene]ethyl phosphate + 2 H2O + H(+). It participates in cofactor biosynthesis; thiamine diphosphate biosynthesis. Its function is as follows. Catalyzes the rearrangement of 1-deoxy-D-xylulose 5-phosphate (DXP) to produce the thiazole phosphate moiety of thiamine. Sulfur is provided by the thiocarboxylate moiety of the carrier protein ThiS. In vitro, sulfur can be provided by H(2)S. This chain is Thiazole synthase, found in Corynebacterium diphtheriae (strain ATCC 700971 / NCTC 13129 / Biotype gravis).